The sequence spans 113 residues: Large ribosomal subunit protein bL17 (113 aa).

Belongs to the bacterial ribosomal protein bL17 family. Part of the 50S ribosomal subunit. Contacts protein L32.

This Clostridium novyi (strain NT) protein is Large ribosomal subunit protein bL17.